The chain runs to 329 residues: uncharacterized protein (329 aa).

The 144-residue stretch at 37 to 180 folds into the SIS domain; that stretch reads LAEKILGHSG…AMLLFHSRGV (144 aa). ATP is bound at residue 52–57; the sequence is GVGKSG. 2 CBS domains span residues 206-265 and 274-329; these read MFPK…GGEV and MTAN…AGLL.

Belongs to the SIS family. GutQ/KpsF subfamily.

This is an uncharacterized protein from Chlamydia pneumoniae (Chlamydophila pneumoniae).